We begin with the raw amino-acid sequence, 595 residues long: DNA mismatch repair protein MutL (595 aa).

It belongs to the DNA mismatch repair MutL/HexB family.

This protein is involved in the repair of mismatches in DNA. It is required for dam-dependent methyl-directed DNA mismatch repair. May act as a 'molecular matchmaker', a protein that promotes the formation of a stable complex between two or more DNA-binding proteins in an ATP-dependent manner without itself being part of a final effector complex. The polypeptide is DNA mismatch repair protein MutL (Rhodopseudomonas palustris (strain TIE-1)).